The chain runs to 313 residues: Pyrimidine-specific ribonucleoside hydrolase RihB (313 aa).

Asp11 acts as the Proton acceptor in catalysis. Residues Asp11, Asp16, and Val124 each contribute to the Ca(2+) site. The substrate site is built by Gln227 and His239. Asp240 serves as a coordination point for Ca(2+).

The protein belongs to the IUNH family. RihB subfamily. As to quaternary structure, homotetramer. Ca(2+) serves as cofactor.

The enzyme catalyses a pyrimidine ribonucleoside + H2O = a pyrimidine nucleobase + D-ribose. In terms of biological role, hydrolyzes cytidine or uridine to ribose and cytosine or uracil, respectively. Has a clear preference for cytidine over uridine. Strictly specific for ribonucleosides. This is Pyrimidine-specific ribonucleoside hydrolase RihB from Escherichia coli O17:K52:H18 (strain UMN026 / ExPEC).